The following is a 101-amino-acid chain: Small ribosomal subunit protein uS14 (101 aa).

Positions 1–10 (MAKKSAIEKN) are enriched in basic and acidic residues. Residues 1-23 (MAKKSAIEKNNRRKKMTKNAAPK) form a disordered region. Basic residues predominate over residues 11-23 (NRRKKMTKNAAPK).

The protein belongs to the universal ribosomal protein uS14 family. Part of the 30S ribosomal subunit. Contacts proteins S3 and S10.

Its function is as follows. Binds 16S rRNA, required for the assembly of 30S particles and may also be responsible for determining the conformation of the 16S rRNA at the A site. The sequence is that of Small ribosomal subunit protein uS14 from Rhodopseudomonas palustris (strain TIE-1).